A 793-amino-acid polypeptide reads, in one-letter code: WASP homolog-associated protein with actin, membranes and microtubules (793 aa).

Positions 1 to 253 (MDSEQPDSLD…EVATSCKLGI (253 aa)) are mediates association with membranes. Residues 254-623 (LKSLDEDELG…FVPVSDQTLS (370 aa)) are mediates interaction with microtubules. Coiled coils occupy residues 265–290 (RRVAALQKEASEWTRQAEEAVGSIQD) and 445–503 (LGDN…LHQH). Disordered regions lie at residues 556-661 (SMVS…SFQG) and 675-699 (EDRPLPLACDPSAGRPCDYQGPGSM). The span at 566–579 (SQKRLSTAHHHKTA) shows a compositional bias: basic residues. The segment covering 618–628 (SDQTLSGSSED) has biased composition (polar residues). The interval 624-793 (GSSEDLSLPP…DEPSPTEWDR (170 aa)) is mediates actin nucleation. Pro residues predominate over residues 632-654 (PPQPPAPPLPPPPPPPPPPPLPP). 2 consecutive WH2 domains span residues 698-716 (SMDEVLASLRQGKASLRKV) and 728-745 (VNEQVLAAIRQGVQLKKV). The stretch at 755-785 (KKSTSDLERSIREALERIKKVSADSEEDNDE) forms a coiled coil. Residues 772–793 (IKKVSADSEEDNDEPSPTEWDR) form a disordered region. Residues 778–787 (DSEEDNDEPS) show a composition bias toward acidic residues. Phosphoserine is present on Ser779.

Interacts with ACTR3; indicative for an association with the ARP2/3 complex. Associates with microtubules; in vitro binds to tubulin heterodimer in a 1:1 stoichiometry; decorates microtubules with a repeat of 80 A along protofilaments. Interacts with RHOD (in GTP-bound form).

Its subcellular location is the cytoplasm. The protein resides in the endoplasmic reticulum-Golgi intermediate compartment. It localises to the cytoplasmic vesicle membrane. It is found in the golgi apparatus. The protein localises to the cis-Golgi network. Acts as a nucleation-promoting factor (NPF) that stimulates Arp2/3-mediated actin polymerization both at the Golgi apparatus and along tubular membranes. Involved as a regulator of Golgi positioning and morphology. Its activity in membrane tubulation requires F-actin and interaction with microtubules. Proposed to use coordinated actin-nucleating and microtubule-binding activities of distinct WHAMM molecules to drive membrane tubule elongation; when MT-bound can recruit and remodel membrane vesicles but is prevented to activate the Arp2/3 complex. Required for RhoD-dependent actin reorganization such as in cell adhesion and cell migration. Participates in vesicle transport between the endoplasmic reticulum and the Golgi complex. This is WASP homolog-associated protein with actin, membranes and microtubules (Whamm) from Mus musculus (Mouse).